A 144-amino-acid chain; its full sequence is Macromomycin (144 aa).

Positions 1-32 are cleaved as a signal peptide; that stretch reads MLQNTSRFLARAGATVGVAAGLAFSLPADRDG. 2 disulfides stabilise this stretch: C68-C78 and C120-C125.

Belongs to the neocarzinostatin family.

Its function is as follows. Binds non-covalently to a chromophore which is the cytotoxic and mutagenic component of the antibiotic. The chromophore binds to DNA as a weak intercalator and causes single- and double-strand breaks. This is Macromomycin from Streptomyces macromomyceticus.